The chain runs to 550 residues: MAAQRHIDINSTQVWAKLHQHQRATRHMHMRELFELDPQRFQRFSLELDGLLLDYSKNRVTERTLELLFDLARKADLRGWMDRMRSGERINVSENRSVLHTALRLPAGARLDLEGHNVAADVHQVLARLKDFSEQVREGRWLGFAGQPIRDVVNLGIGGSDLGPLVAADALAAYAHPDLKVHFVSNVDGQHLARTLERLNPATTLFIVASKSFTTPETLLNAQAARAWFLQAAGEAQIAKHFVAVSTNEPAVRAFGIDPQHMFGFWDWVGGRYSVWSAIGLPVMLSIGYDNFRAFLDGGHAMDRHFFESPFDANMPVLLALIGIWYNTFYRAHTHAIMPYDHGLRRLPAHIQQLDMESNGKRVGRLGEALDFDTGPVIWGEEGANSQHAFFQLLHQGTRLVPCDFILPLNSHYPLGNQHDVLVANCLAQTEALMRGKNEAEVMRELSHLSGEQLDMLLPQKLFPGNQPSNTLALDRVTPYSMGMLMALYEHKVFVQGVIWGINSFDQWGVEYGKQLARRILPELSGDTGALGHDSSTNGLIRHYRERHGK.

Glu357 functions as the Proton donor in the catalytic mechanism. Residues His388 and Lys514 contribute to the active site. Positions 527-550 are disordered; the sequence is DTGALGHDSSTNGLIRHYRERHGK.

This sequence belongs to the GPI family.

It localises to the cytoplasm. The catalysed reaction is alpha-D-glucose 6-phosphate = beta-D-fructose 6-phosphate. Its pathway is carbohydrate biosynthesis; gluconeogenesis. The protein operates within carbohydrate degradation; glycolysis; D-glyceraldehyde 3-phosphate and glycerone phosphate from D-glucose: step 2/4. Catalyzes the reversible isomerization of glucose-6-phosphate to fructose-6-phosphate. In Chromobacterium violaceum (strain ATCC 12472 / DSM 30191 / JCM 1249 / CCUG 213 / NBRC 12614 / NCIMB 9131 / NCTC 9757 / MK), this protein is Glucose-6-phosphate isomerase 2.